The following is a 129-amino-acid chain: Small ribosomal subunit protein uS11 (129 aa).

It belongs to the universal ribosomal protein uS11 family. In terms of assembly, part of the 30S ribosomal subunit. Interacts with proteins S7 and S18. Binds to IF-3.

Functionally, located on the platform of the 30S subunit, it bridges several disparate RNA helices of the 16S rRNA. Forms part of the Shine-Dalgarno cleft in the 70S ribosome. The polypeptide is Small ribosomal subunit protein uS11 (Methylobacillus flagellatus (strain ATCC 51484 / DSM 6875 / VKM B-1610 / KT)).